Here is a 476-residue protein sequence, read N- to C-terminus: Aspartyl/glutamyl-tRNA(Asn/Gln) amidotransferase subunit B (476 aa).

It belongs to the GatB/GatE family. GatB subfamily. As to quaternary structure, heterotrimer of A, B and C subunits.

It carries out the reaction L-glutamyl-tRNA(Gln) + L-glutamine + ATP + H2O = L-glutaminyl-tRNA(Gln) + L-glutamate + ADP + phosphate + H(+). It catalyses the reaction L-aspartyl-tRNA(Asn) + L-glutamine + ATP + H2O = L-asparaginyl-tRNA(Asn) + L-glutamate + ADP + phosphate + 2 H(+). Allows the formation of correctly charged Asn-tRNA(Asn) or Gln-tRNA(Gln) through the transamidation of misacylated Asp-tRNA(Asn) or Glu-tRNA(Gln) in organisms which lack either or both of asparaginyl-tRNA or glutaminyl-tRNA synthetases. The reaction takes place in the presence of glutamine and ATP through an activated phospho-Asp-tRNA(Asn) or phospho-Glu-tRNA(Gln). In Listeria monocytogenes serovar 1/2a (strain ATCC BAA-679 / EGD-e), this protein is Aspartyl/glutamyl-tRNA(Asn/Gln) amidotransferase subunit B.